The primary structure comprises 556 residues: MASTLQVSSRKCKNCGSTDFVRDISNTTNELICKVCGLVTEENSIVSEVTFGEASNGAAVIQGAFVSANQAHPTFMSHSGQNALMSRETTLNNARRKLKAVSYALNIPEYVTDAAFQWYRLALSNNFVQGRKSQNVIAACLYIACRKERTHHMLIDFSSRLQVSVYSIGATFLKLAKKLQIVKLPLADPSLFIQHFAEKLELGDKKIKVIRDAVKLAQTMSRDWMYEGRRPAGIAGACLLLACRMNNLRRTHSEIVAISHVAEETLQQRLNEFKNTTSAKLSVKEFRDDETEVNEGERSAESKPPSFDKNRLKEKKIKDSLDTKEMLETSEEAVSRNPILTQVLGAQELSSKEVLYYLKKLSERRKAEFSRIKATHGIDGEDLHKTEKDKKRSLDEIDGYSLEKDPYRPRNLHLLPTTASLLSKVSDHPENLDDVDDAELDSHLLDEEASKLKERIWIDINGDYLIEQESKRLKQEADLASGNTSLRKKRSKRTNRNQSSASIVKVQVDGLPLDVSVDDADAVDVVAAGGVKNLLQKTTFSKKINYDAINGLFGQK.

A TFIIB-type zinc finger spans residues 8-41; sequence SSRKCKNCGSTDFVRDISNTTNELICKVCGLVTE. 4 residues coordinate Zn(2+): Cys12, Cys15, Cys33, and Cys36. 2 repeat units span residues 98 to 174 and 193 to 272. Positions 98–272 are interaction with TBP and with the Pol III subunit C34; it reads LKAVSYALNI…EETLQQRLNE (175 aa). The tract at residues 284-556 is interaction with TBP; it reads KEFRDDETEV…DAINGLFGQK (273 aa). Disordered regions lie at residues 287–309 and 477–501; these read RDDETEVNEGERSAESKPPSFDK and ADLASGNTSLRKKRSKRTNRNQSSA. The segment covering 295–309 has biased composition (basic and acidic residues); sequence EGERSAESKPPSFDK. Positions 486–495 are enriched in basic residues; that stretch reads LRKKRSKRTN.

The protein belongs to the TFIIB family. TFIIIB comprises the TATA-binding protein (TBP), the B-related factor (BRF) and a 70 kDa polypeptide.

The protein resides in the nucleus. General activator of RNA polymerase III transcription. Interacts with TBP. Binds to Pol III subunit C34 and to the TAU135 component of TFIIIC. This is Transcription factor IIIB 70 kDa subunit (TDS4) from Kluyveromyces lactis (strain ATCC 8585 / CBS 2359 / DSM 70799 / NBRC 1267 / NRRL Y-1140 / WM37) (Yeast).